The sequence spans 411 residues: RNA binding protein fox-1 homolog 2 (411 aa).

A disordered region spans residues 16–175; that stretch reads TRGTKRESDQ…SETKASPKRL (160 aa). Polar residues-rich tracts occupy residues 58–83 and 99–119; these read PVSQ…TPDT and NGLS…QSTE. The segment covering 135 to 165 has biased composition (low complexity); it reads SAPATSTANASSTTDGSQTEGQQSQSQNNEN. Residues 173 to 249 form the RRM domain; sequence KRLHVSNIPF…RKIEVNNATA (77 aa).

In terms of assembly, interacts with papd4/gld2.

It localises to the nucleus. It is found in the cytoplasm. Its function is as follows. RNA-binding protein that regulates alternative splicing events by binding to 5'-UGCAUGU-3' elements. Regulates alternative splicing of tissue-specific exons. This Xenopus laevis (African clawed frog) protein is RNA binding protein fox-1 homolog 2 (rbfox2).